The sequence spans 264 residues: Methylthioribulose-1-phosphate dehydratase (264 aa).

Substrate is bound at residue Cys110. Residues His128 and His130 each contribute to the Zn(2+) site. The active-site Proton donor/acceptor is the Glu151. His213 lines the Zn(2+) pocket.

The protein belongs to the aldolase class II family. MtnB subfamily. It depends on Zn(2+) as a cofactor.

The protein resides in the cytoplasm. It catalyses the reaction 5-(methylsulfanyl)-D-ribulose 1-phosphate = 5-methylsulfanyl-2,3-dioxopentyl phosphate + H2O. Its pathway is amino-acid biosynthesis; L-methionine biosynthesis via salvage pathway; L-methionine from S-methyl-5-thio-alpha-D-ribose 1-phosphate: step 2/6. Catalyzes the dehydration of methylthioribulose-1-phosphate (MTRu-1-P) into 2,3-diketo-5-methylthiopentyl-1-phosphate (DK-MTP-1-P). In Vanderwaltozyma polyspora (strain ATCC 22028 / DSM 70294 / BCRC 21397 / CBS 2163 / NBRC 10782 / NRRL Y-8283 / UCD 57-17) (Kluyveromyces polysporus), this protein is Methylthioribulose-1-phosphate dehydratase.